A 214-amino-acid polypeptide reads, in one-letter code: Thymidylate kinase (214 aa).

12 to 19 (GLDGSGKS) serves as a coordination point for ATP.

This sequence belongs to the thymidylate kinase family.

It catalyses the reaction dTMP + ATP = dTDP + ADP. In terms of biological role, phosphorylation of dTMP to form dTDP in both de novo and salvage pathways of dTTP synthesis. The protein is Thymidylate kinase of Bdellovibrio bacteriovorus (strain ATCC 15356 / DSM 50701 / NCIMB 9529 / HD100).